A 527-amino-acid polypeptide reads, in one-letter code: F-box protein SKIP2 (527 aa).

One can recognise an F-box domain in the interval 39-85 (DRDFTGDLPDECLAHVFQFLGAGDRKRCSLVCKRWLLVDGQSRHRLS).

As to quaternary structure, part of a SCF (ASK-cullin-F-box) protein ligase complex. Interacts with SKP1A/ASK1, SKP1B/ASK2 and ASK11.

It localises to the nucleus. It participates in protein modification; protein ubiquitination. Component of SCF(ASK-cullin-F-box) E3 ubiquitin ligase complexes, which may mediate the ubiquitination and subsequent proteasomal degradation of target proteins. The sequence is that of F-box protein SKIP2 (SKIP2) from Arabidopsis thaliana (Mouse-ear cress).